The following is a 362-amino-acid chain: Hydroxycarboxylate dehydrogenase A (362 aa).

Residues D173, H257, and H274 each coordinate Zn(2+).

This sequence belongs to the iron-containing alcohol dehydrogenase family. It depends on Zn(2+) as a cofactor.

It carries out the reaction 2-hydroxybutanoate + NADP(+) = 2-oxobutanoate + NADPH + H(+). It catalyses the reaction 2-hydroxyglutarate + NADP(+) = 2-oxoglutarate + NADPH + H(+). Its function is as follows. Catalyzes the NADPH-dependent reduction of 2-oxoglutarate and 2-oxobutanoate, leading to the respective 2-hydroxycarboxylate. Cannot use NADH instead of NADPH as a redox partner. Do not catalyze the reverse reactions. The protein is Hydroxycarboxylate dehydrogenase A of Escherichia coli (strain K12).